The sequence spans 435 residues: Putative dimethyl sulfoxide reductase membrane subunit C (435 aa).

11 helical membrane passes run 22-42 (GWLG…AYQL), 57-77 (WGLY…GLIL), 95-115 (LGVL…LPDI), 135-155 (VWDF…LWLL), 186-206 (FWTA…TGWI), 220-240 (LVAP…LLVV), 257-277 (LTSL…YLLA), 281-301 (LPHA…FLIG), 304-324 (VYFW…LATP), 333-353 (IFTA…RLVF), and 392-412 (VEIA…MAGL).

This sequence belongs to the NrfD family. In terms of assembly, probable multiprotein complex that likely consists of DmsA, DmsB and DmsC.

The protein localises to the cell membrane. Functionally, dimethyl sulfoxide (DMSO) reductase catalyzes the reduction of dimethyl sulfoxide (DMSO) to dimethyl sulfide (DMS) during anaerobic respiration; it can also use trimethylamine N-oxide (TMAO) as terminal electron acceptor. Subunit C is proposed to be a membrane anchoring subunit. The protein is Putative dimethyl sulfoxide reductase membrane subunit C (dmsC) of Halobacterium salinarum (strain ATCC 700922 / JCM 11081 / NRC-1) (Halobacterium halobium).